The following is a 562-amino-acid chain: Protein KASH5 (562 aa).

Residues 1 to 521 (MDLPEGPVGG…PQRLRVTRHP (521 aa)) lie on the Cytoplasmic side of the membrane. The disordered stretch occupies residues 125–153 (ALTSRQLPSGCPEAEEPANLESFGGEDPR). Residues 164–349 (SSLEDLELSN…LEEQLSQTYE (186 aa)) adopt a coiled-coil conformation. Positions 407-481 (ETSEETEFPS…DIPENPPERP (75 aa)) are disordered. Positions 431-448 (AHPEEGRKEPSMWLTRRE) are enriched in basic and acidic residues. Residues 522 to 542 (LIPAPVLGLLLLLLLSVLLLG) traverse the membrane as a helical; Anchor for type IV membrane protein segment. Positions 541–562 (LGPSPPPTWPHLQLCYLQPPPV) are interaction with SUN1. The Perinuclear space segment spans residues 543–562 (PSPPPTWPHLQLCYLQPPPV).

As to quaternary structure, core component the LINC complex which is composed of inner nuclear membrane SUN domain-containing proteins coupled to outer nuclear membrane KASH domain-containing nesprins. SUN and KASH domain-containing proteins seem to bind each other promiscuously; however, differentially expression of LINC complex constituents is giving rise to specific assemblies. At least SUN1/2-containing core LINC complexes are proposed to be hexameric composed of three protomers of each KASH and SUN domain-containing protein. Interacts with SUN1; this interaction mediates its telomere localization by forming a SUN1:KASH5 LINC complex. Component of a probable SUN2:KASH5 LINC complex. Self-associates. Interacts with DYNC1H1, DCTN1, DYNC1I1/2 and PAFAH1B1; suggesting the association with the dynein-dynactin motor complex. As to expression, expressed in testis (at protein level).

The protein resides in the nucleus outer membrane. It localises to the nucleus. It is found in the chromosome. Its subcellular location is the telomere. The protein localises to the nucleus envelope. In terms of biological role, as a component of the LINC (LInker of Nucleoskeleton and Cytoskeleton) complex, involved in the connection between the nuclear lamina and the cytoskeleton. The nucleocytoplasmic interactions established by the LINC complex play an important role in the transmission of mechanical forces across the nuclear envelope and in nuclear movement and positioning. Required for telomere attachment to nuclear envelope in the prophase of meiosis. Required for rapid telomere prophase movements implicating a SUN1/2:KASH5 LINC complex in which SUN1 and SUN2 seem to act at least partial redundantly. Required for homolog pairing during meiotic prophase in spermatocytes and probably oocytes. Essential for male and female gametogenesis. Recruits cytoplasmic dynein to telomere attachment sites at the nuclear envelope in spermatocytes. In oocytes is involved in meiotic resumption and spindle formation. The polypeptide is Protein KASH5 (Homo sapiens (Human)).